A 485-amino-acid chain; its full sequence is Trk system potassium uptake protein TrkH (485 aa).

Over 1-2 (MQ) the chain is Cytoplasmic. A helical membrane pass occupies residues 3–29 (FRSIIRIVGLLLALFSVTMLAPALVAL). The Periplasmic portion of the chain corresponds to 30–35 (LYRDGA). The helical transmembrane segment at 36-57 (GVPFVTTFFVLLFCGAMCWFPN) threads the bilayer. Residues 58 to 65 (RRHKHELK) are Cytoplasmic-facing. A helical membrane pass occupies residues 66–90 (SRDGFLIVVLFWTVLGSAGSLPFLI). The helical; Pore-forming intramembrane region spans 98-109 (VTDAFFESFSAL). Residues 110–115 (TTTGAT) lie within the membrane without spanning it. A selectivity filter part 1 region spans residues 110-115 (TTTGAT). Positions 111 and 112 each coordinate K(+). Over 116 to 124 (VIVGLDELP) the chain is Periplasmic. Residues 125–150 (KAILFYRQFLQWFGGMGIIVLAVAIL) traverse the membrane as a helical segment. Residues 151–177 (PVLGIGGMQLYRAEIPGPVKDTKMTPR) are Cytoplasmic-facing. The chain crosses the membrane as a helical span at residues 178–202 (IAETAKALWYIYLSLTIACAVAFWL). Topologically, residues 203–205 (AGM) are periplasmic. T206 is an intramembrane region. An intramembrane region (helical; Pore-forming) is located at residues 207-218 (PFDAISHSFSTI). The stretch at 219–224 (AIGGFS) is an intramembrane region. Positions 219-224 (AIGGFS) are selectivity filter part 2. Residues I220 and G221 each coordinate K(+). Topologically, residues 225–234 (THDASMGYFD) are periplasmic. The segment at residues 235 to 250 (SYAINLITVVFLLISA) is an intramembrane region (helical). The helical transmembrane segment at 276–296 (FRAFIFIQVLLFLVCFLLLLK) threads the bilayer. Residues 303-318 (PYDAFDQALFQTVSIS) constitute an intramembrane region (helical; Pore-forming). Residues 319 to 324 (TTAGFT) lie within the membrane without spanning it. The selectivity filter part 3 stretch occupies residues 319 to 324 (TTAGFT). 2 residues coordinate K(+): T320 and A321. Residues 325-332 (TTGFADWP) lie on the Periplasmic side of the membrane. Positions 333 to 344 (LFLPVLLLFSSF) form an intramembrane region, helical. An intramembrane region (note=Loop between two helices) is located at residues 345 to 357 (IGGCAGSTGGGMK). A helical membrane pass occupies residues 392 to 419 (PQRVVDAVWGFFSAYALVFVVCMLGLIA). The Periplasmic segment spans residues 420–421 (TG). The stretch at 422 to 423 (MD) is an intramembrane region. Positions 424 to 434 (ELSAFSAVAAT) form an intramembrane region, helical; Pore-forming. Residues 435-441 (LNNLGPG) lie within the membrane without spanning it. The selectivity filter part 4 stretch occupies residues 436–441 (NNLGPG). The K(+) site is built by N437 and L438. The Periplasmic portion of the chain corresponds to 442–453 (LGEVALHFGDVN). Residues 454 to 465 (DKAKWVLIVSML) constitute an intramembrane region (helical).

It belongs to the TrkH potassium transport family. Homodimer.

The protein resides in the cell inner membrane. Functionally, low-affinity potassium transport system. Interacts with trk system potassium uptake protein TrkA and requires TrkE for transport activity. Selective for permeation of potassium ion and rubidium ion over smaller ions such as natrium or litium. The chain is Trk system potassium uptake protein TrkH from Vibrio parahaemolyticus serotype O3:K6 (strain RIMD 2210633).